The sequence spans 253 residues: Tetraspanin-11 (253 aa).

Helical transmembrane passes span 19–39, 63–83, 93–113, and 220–240; these read LLFI…AVGI, VLIF…GAII, YFCL…LAHV, and LLLM…GMVL.

It belongs to the tetraspanin (TM4SF) family.

Its subcellular location is the membrane. The sequence is that of Tetraspanin-11 (Tspan11) from Rattus norvegicus (Rat).